The following is a 385-amino-acid chain: 4-hydroxy-3-methylbut-2-en-1-yl diphosphate synthase (flavodoxin) 2 (385 aa).

Residues cysteine 281, cysteine 284, cysteine 316, and glutamate 323 each contribute to the [4Fe-4S] cluster site.

This sequence belongs to the IspG family. Requires [4Fe-4S] cluster as cofactor.

It catalyses the reaction (2E)-4-hydroxy-3-methylbut-2-enyl diphosphate + oxidized [flavodoxin] + H2O + 2 H(+) = 2-C-methyl-D-erythritol 2,4-cyclic diphosphate + reduced [flavodoxin]. It functions in the pathway isoprenoid biosynthesis; isopentenyl diphosphate biosynthesis via DXP pathway; isopentenyl diphosphate from 1-deoxy-D-xylulose 5-phosphate: step 5/6. Converts 2C-methyl-D-erythritol 2,4-cyclodiphosphate (ME-2,4cPP) into 1-hydroxy-2-methyl-2-(E)-butenyl 4-diphosphate. The protein is 4-hydroxy-3-methylbut-2-en-1-yl diphosphate synthase (flavodoxin) 2 of Streptomyces avermitilis (strain ATCC 31267 / DSM 46492 / JCM 5070 / NBRC 14893 / NCIMB 12804 / NRRL 8165 / MA-4680).